Reading from the N-terminus, the 130-residue chain is Small ribosomal subunit protein uS11 (130 aa).

The protein belongs to the universal ribosomal protein uS11 family. In terms of assembly, part of the 30S ribosomal subunit. Interacts with proteins S7 and S18. Binds to IF-3.

Functionally, located on the platform of the 30S subunit, it bridges several disparate RNA helices of the 16S rRNA. Forms part of the Shine-Dalgarno cleft in the 70S ribosome. This chain is Small ribosomal subunit protein uS11, found in Parasynechococcus marenigrum (strain WH8102).